The primary structure comprises 268 residues: Tryptophan synthase alpha chain (268 aa).

Active-site proton acceptor residues include E49 and D60.

The protein belongs to the TrpA family. As to quaternary structure, tetramer of two alpha and two beta chains.

It catalyses the reaction (1S,2R)-1-C-(indol-3-yl)glycerol 3-phosphate + L-serine = D-glyceraldehyde 3-phosphate + L-tryptophan + H2O. The protein operates within amino-acid biosynthesis; L-tryptophan biosynthesis; L-tryptophan from chorismate: step 5/5. The alpha subunit is responsible for the aldol cleavage of indoleglycerol phosphate to indole and glyceraldehyde 3-phosphate. This Escherichia coli O6:H1 (strain CFT073 / ATCC 700928 / UPEC) protein is Tryptophan synthase alpha chain.